The chain runs to 602 residues: MDSPTLPHSISASSSTPFASAAVKPHRNKLLSRNGILIIIAASCILLLLISLLIYATVSKSSRNHHNPSHQTPTSDDHPPPETPPSPPPIAQIRLACNATRFPDHCVASLSKPGQVPPDPKPVQIIHSAISVSYENLKSGQSKIQSILDSSAGNRNRTNIATICLEILSYSQHRTESTDIAVTSGDIKDARAWMSAALAYQFDCWSGLKTVNDTKQVVDTITFFEGLVNLTGNALSMMLSFDSFGDDVVSWIRPATERDGFWEKAGPSLGSGTGTEASLGFPSGLTEDVTVCKNGGKDCKYKTVQEAVDSAPDTNRTVKFVIRIREGVYEETVRVPFEKKNVVFIGDGMGKTVITGSLNVGQPGMTTFESATVGVLGDGFMARDLTIENTAGADAHQAVAFRSDSDFSVLENCEFLGNQDTLYAHSLRQFYKQCRIQGNVDFIFGNSAAVFQDCDILIASKHSKLEQGGANNAITAHGRIDASQSTGFVFLNCSINGTEEYMKEFQANPEGHKNFLGRPWKEFSRTVFVNCNLESLISPDGWMPWNGDFALKTLYYGEYKNTGPGSVRSSRVPWSSEIPEKHVDVYSVANFIQADEWASTTA.

A helical transmembrane segment spans residues 36 to 56 (ILIIIAASCILLLLISLLIYA). The interval 62-91 (SRNHHNPSHQTPTSDDHPPPETPPSPPPIA) is disordered. Residues 81 to 90 (PETPPSPPPI) are compositionally biased toward pro residues. Positions 87–237 (PPPIAQIRLA…VNLTGNALSM (151 aa)) are pectinesterase inhibitor 64. N-linked (GlcNAc...) asparagine glycosylation is found at N98, N156, N212, N229, and N315. The interval 288–595 (DVTVCKNGGK…YSVANFIQAD (308 aa)) is pectinesterase 64. 2 residues coordinate substrate: T367 and Q397. D420 acts as the Proton donor; for pectinesterase activity in catalysis. C434 and C454 form a disulfide bridge. The active-site Nucleophile; for pectinesterase activity is the D441. N-linked (GlcNAc...) asparagine glycosylation is found at N492 and N496. Residues R518 and W520 each contribute to the substrate site.

It in the N-terminal section; belongs to the PMEI family. In the C-terminal section; belongs to the pectinesterase family. As to expression, expressed in siliques.

The protein resides in the membrane. The catalysed reaction is [(1-&gt;4)-alpha-D-galacturonosyl methyl ester](n) + n H2O = [(1-&gt;4)-alpha-D-galacturonosyl](n) + n methanol + n H(+). The protein operates within glycan metabolism; pectin degradation; 2-dehydro-3-deoxy-D-gluconate from pectin: step 1/5. Functionally, acts in the modification of cell walls via demethylesterification of cell wall pectin. The chain is Probable pectinesterase/pectinesterase inhibitor 64 (PME64) from Arabidopsis thaliana (Mouse-ear cress).